The primary structure comprises 511 residues: GMP synthase [glutamine-hydrolyzing] (511 aa).

A Glutamine amidotransferase type-1 domain is found at 5–195 (AILVLDFGSQ…VFKICQAQIN (191 aa)). The active-site Nucleophile is the Cys82. Residues His169 and Glu171 contribute to the active site. The GMPS ATP-PPase domain maps to 196–386 (WSLEGNLETI…LGIKKESLYR (191 aa)). 223 to 229 (SGGTDSL) provides a ligand contact to ATP.

As to quaternary structure, homodimer.

The enzyme catalyses XMP + L-glutamine + ATP + H2O = GMP + L-glutamate + AMP + diphosphate + 2 H(+). It functions in the pathway purine metabolism; GMP biosynthesis; GMP from XMP (L-Gln route): step 1/1. Its function is as follows. Catalyzes the synthesis of GMP from XMP. This chain is GMP synthase [glutamine-hydrolyzing] (guaA), found in Borreliella burgdorferi (strain N40) (Borrelia burgdorferi).